We begin with the raw amino-acid sequence, 568 residues long: NADH-ubiquinone oxidoreductase chain 5 (568 aa).

Transmembrane regions (helical) follow at residues 7–27, 44–64, 90–110, 144–164, 165–185, 210–232, 240–260, 274–294, 297–317, 334–354, 378–398, 426–446, 452–472, and 547–567; these read LGLL…SSFG, FSFS…VLVI, WLFV…MLLI, IGDV…GWLI, YSYH…FAGM, LVHS…YIIS, VLMI…VFAF, LSLM…FHLV, AVFK…NQSI, MGAM…SGFF, LLGL…VMLG, AIIL…VVVL, LSVF…ISKL, and FTYQ…LIIF.

This sequence belongs to the complex I subunit 5 family.

It localises to the mitochondrion inner membrane. The catalysed reaction is a ubiquinone + NADH + 5 H(+)(in) = a ubiquinol + NAD(+) + 4 H(+)(out). Core subunit of the mitochondrial membrane respiratory chain NADH dehydrogenase (Complex I) that is believed to belong to the minimal assembly required for catalysis. Complex I functions in the transfer of electrons from NADH to the respiratory chain. The immediate electron acceptor for the enzyme is believed to be ubiquinone. The chain is NADH-ubiquinone oxidoreductase chain 5 (ND5) from Mytilus edulis (Blue mussel).